A 382-amino-acid chain; its full sequence is Carbamoyl phosphate synthase small chain (382 aa).

Residues Met-1 to Glu-187 form a CPSase region. 3 residues coordinate L-glutamine: Ser-47, Gly-239, and Gly-241. Positions Thr-191–Gln-377 constitute a Glutamine amidotransferase type-1 domain. Cys-267 acts as the Nucleophile in catalysis. L-glutamine-binding residues include Leu-268, Gln-271, Asn-307, Gly-309, and Phe-310. Catalysis depends on residues His-350 and Glu-352.

It belongs to the CarA family. In terms of assembly, composed of two chains; the small (or glutamine) chain promotes the hydrolysis of glutamine to ammonia, which is used by the large (or ammonia) chain to synthesize carbamoyl phosphate. Tetramer of heterodimers (alpha,beta)4.

The catalysed reaction is hydrogencarbonate + L-glutamine + 2 ATP + H2O = carbamoyl phosphate + L-glutamate + 2 ADP + phosphate + 2 H(+). It carries out the reaction L-glutamine + H2O = L-glutamate + NH4(+). It participates in amino-acid biosynthesis; L-arginine biosynthesis; carbamoyl phosphate from bicarbonate: step 1/1. It functions in the pathway pyrimidine metabolism; UMP biosynthesis via de novo pathway; (S)-dihydroorotate from bicarbonate: step 1/3. Small subunit of the glutamine-dependent carbamoyl phosphate synthetase (CPSase). CPSase catalyzes the formation of carbamoyl phosphate from the ammonia moiety of glutamine, carbonate, and phosphate donated by ATP, constituting the first step of 2 biosynthetic pathways, one leading to arginine and/or urea and the other to pyrimidine nucleotides. The small subunit (glutamine amidotransferase) binds and cleaves glutamine to supply the large subunit with the substrate ammonia. The chain is Carbamoyl phosphate synthase small chain from Thermosynechococcus vestitus (strain NIES-2133 / IAM M-273 / BP-1).